A 217-amino-acid chain; its full sequence is uncharacterized protein (217 aa).

Disordered stretches follow at residues 1-85 (MGVK…RGNT) and 167-189 (KLRS…EPDE). Residues 38 to 48 (AKSDKDKRKGS) show a composition bias toward basic and acidic residues. A compositionally biased stretch (low complexity) spans 60-78 (NALPTKNLTTPPALNPLTT). A compositionally biased stretch (basic and acidic residues) spans 172 to 189 (PHKDQHNSATNKDQEPDE).

This is an uncharacterized protein from Saccharomyces cerevisiae (strain ATCC 204508 / S288c) (Baker's yeast).